Reading from the N-terminus, the 155-residue chain is Fibroblast growth factor 1 (155 aa).

The propeptide occupies 1–15 (MAEGDITTFNAITES). Heparin is bound at residue N33. The interval 127 to 143 (KKNGASKKGSRTHYGQK) is heparin-binding.

This sequence belongs to the heparin-binding growth factors family.

It is found in the secreted. The protein localises to the cytoplasm. The protein resides in the cell cortex. Its subcellular location is the cytosol. It localises to the nucleus. Plays an important role in the regulation of cell survival, cell division, angiogenesis, cell differentiation and cell migration. Functions as a potent mitogen in vitro. Acts as a ligand for FGFR1 and integrins. Binds to FGFR1 in the presence of heparin leading to FGFR1 dimerization and activation via sequential autophosphorylation on tyrosine residues which act as docking sites for interacting proteins, leading to the activation of several signaling cascades. Binds to integrins. Its binding to integrins and subsequent ternary complex formation with integrins and FGFR1 are essential for FGF1 signaling. The protein is Fibroblast growth factor 1 (fgf1) of Xenopus laevis (African clawed frog).